A 130-amino-acid polypeptide reads, in one-letter code: uncharacterized protein (130 aa).

This is an uncharacterized protein from Sinorhizobium fredii (strain NBRC 101917 / NGR234).